The following is a 179-amino-acid chain: MARLKEIYRKEIAPKLKEELQLANVMEVPRVTKITLNMGLGEAVGDKKIIENAVADLEKITGQKPVVTYARKSIAGFKIREGWPIGVKVTLRSDRMYEFLDRLLSISLPRVRDFRGLNAKSFDGRGNYSMGVKEQIIFPEIDYDKIDALRGLDITLTTTARTDDEGRALLRAFKFPFRN.

The protein belongs to the universal ribosomal protein uL5 family. In terms of assembly, part of the 50S ribosomal subunit; part of the 5S rRNA/L5/L18/L25 subcomplex. Contacts the 5S rRNA and the P site tRNA. Forms a bridge to the 30S subunit in the 70S ribosome.

This is one of the proteins that bind and probably mediate the attachment of the 5S RNA into the large ribosomal subunit, where it forms part of the central protuberance. In the 70S ribosome it contacts protein S13 of the 30S subunit (bridge B1b), connecting the 2 subunits; this bridge is implicated in subunit movement. Contacts the P site tRNA; the 5S rRNA and some of its associated proteins might help stabilize positioning of ribosome-bound tRNAs. This chain is Large ribosomal subunit protein uL5, found in Pseudomonas aeruginosa (strain LESB58).